The chain runs to 630 residues: Lysophospholipase 3 (630 aa).

The signal sequence occupies residues 1–16; the sequence is MKALLSLLTAVAVATA. The PLA2c domain maps to 39–587; that stretch reads SCPATRPSIR…KEYCWNGTVD (549 aa). Residues Asn-56, Asn-95, Asn-164, Asn-220, Asn-283, Asn-351, Asn-390, Asn-443, Asn-456, Asn-462, Asn-493, Asn-514, Asn-542, Asn-566, and Asn-583 are each glycosylated (N-linked (GlcNAc...) asparagine). Asn-606 carries the GPI-like-anchor amidated asparagine lipid modification. Residues 607-630 constitute a propeptide, removed in mature form; that stretch reads AAYTQGVTWLVGILAVGVAMGMTA.

Belongs to the lysophospholipase family. Post-translationally, the GPI-like anchor contains a phosphoceramide lipid group.

The protein resides in the cell membrane. It catalyses the reaction a 1-acyl-sn-glycero-3-phosphocholine + H2O = sn-glycerol 3-phosphocholine + a fatty acid + H(+). Catalyzes the release of fatty acids from lysophospholipids. This chain is Lysophospholipase 3 (plb3), found in Aspergillus fumigatus (strain CBS 144.89 / FGSC A1163 / CEA10) (Neosartorya fumigata).